The chain runs to 782 residues: Endonuclease MutS2 (782 aa).

Gly-336–Thr-343 lines the ATP pocket. The region spanning Leu-707–Lys-782 is the Smr domain.

It belongs to the DNA mismatch repair MutS family. MutS2 subfamily. Homodimer. Binds to stalled ribosomes, contacting rRNA.

Endonuclease that is involved in the suppression of homologous recombination and thus may have a key role in the control of bacterial genetic diversity. Functionally, acts as a ribosome collision sensor, splitting the ribosome into its 2 subunits. Detects stalled/collided 70S ribosomes which it binds and splits by an ATP-hydrolysis driven conformational change. Acts upstream of the ribosome quality control system (RQC), a ribosome-associated complex that mediates the extraction of incompletely synthesized nascent chains from stalled ribosomes and their subsequent degradation. Probably generates substrates for RQC. The polypeptide is Endonuclease MutS2 (Staphylococcus aureus (strain JH1)).